The following is a 435-amino-acid chain: Gamma-glutamyl phosphate reductase (435 aa).

The protein belongs to the gamma-glutamyl phosphate reductase family.

It is found in the cytoplasm. The enzyme catalyses L-glutamate 5-semialdehyde + phosphate + NADP(+) = L-glutamyl 5-phosphate + NADPH + H(+). It participates in amino-acid biosynthesis; L-proline biosynthesis; L-glutamate 5-semialdehyde from L-glutamate: step 2/2. Its function is as follows. Catalyzes the NADPH-dependent reduction of L-glutamate 5-phosphate into L-glutamate 5-semialdehyde and phosphate. The product spontaneously undergoes cyclization to form 1-pyrroline-5-carboxylate. This is Gamma-glutamyl phosphate reductase from Synechococcus sp. (strain WH7803).